The following is a 278-amino-acid chain: Large ribosomal subunit protein uL2 (278 aa).

Disordered regions lie at residues 1–20, 25–57, and 224–278; these read MAIRKYKPTTPGRRGSSVSD, TRSTPEKSLLRPLTKSGGRNAHGRITTRHRGGG, and VVMN…GKKR. 2 stretches are compositionally biased toward basic residues: residues 45–57 and 269–278; these read AHGRITTRHRGGG and VRRRKTGKKR.

Belongs to the universal ribosomal protein uL2 family. As to quaternary structure, part of the 50S ribosomal subunit. Forms a bridge to the 30S subunit in the 70S ribosome.

Functionally, one of the primary rRNA binding proteins. Required for association of the 30S and 50S subunits to form the 70S ribosome, for tRNA binding and peptide bond formation. It has been suggested to have peptidyltransferase activity; this is somewhat controversial. Makes several contacts with the 16S rRNA in the 70S ribosome. In Nocardia farcinica (strain IFM 10152), this protein is Large ribosomal subunit protein uL2.